Here is a 120-residue protein sequence, read N- to C-terminus: NAD(P)H-quinone oxidoreductase subunit 3, chloroplastic (120 aa).

Helical transmembrane passes span 9–29 (IFWA…LISG), 64–84 (MFAL…PWAM), and 88–108 (VLGV…IVGS).

It belongs to the complex I subunit 3 family. In terms of assembly, NDH is composed of at least 16 different subunits, 5 of which are encoded in the nucleus.

The protein localises to the plastid. Its subcellular location is the chloroplast thylakoid membrane. The catalysed reaction is a plastoquinone + NADH + (n+1) H(+)(in) = a plastoquinol + NAD(+) + n H(+)(out). It catalyses the reaction a plastoquinone + NADPH + (n+1) H(+)(in) = a plastoquinol + NADP(+) + n H(+)(out). In terms of biological role, NDH shuttles electrons from NAD(P)H:plastoquinone, via FMN and iron-sulfur (Fe-S) centers, to quinones in the photosynthetic chain and possibly in a chloroplast respiratory chain. The immediate electron acceptor for the enzyme in this species is believed to be plastoquinone. Couples the redox reaction to proton translocation, and thus conserves the redox energy in a proton gradient. The protein is NAD(P)H-quinone oxidoreductase subunit 3, chloroplastic of Liriodendron tulipifera (Tuliptree).